The sequence spans 311 residues: Probable cobalamin biosynthesis protein CobD (311 aa).

4 consecutive transmembrane segments (helical) span residues 53–73 (FIFGTLTTISVLFIVFGAIYG), 76–96 (ILINNIQNIYIKYIVYSFLIS), 157–177 (DSIIAPLFYAIFFGLEGAFIY), and 288–308 (FSIDVVIFSFIVLYSIYYVIF).

It belongs to the CobD/CbiB family.

Its subcellular location is the cell membrane. The protein operates within cofactor biosynthesis; adenosylcobalamin biosynthesis. In terms of biological role, converts cobyric acid to cobinamide by the addition of aminopropanol on the F carboxylic group. This chain is Probable cobalamin biosynthesis protein CobD, found in Methanococcus aeolicus (strain ATCC BAA-1280 / DSM 17508 / OCM 812 / Nankai-3).